The chain runs to 229 residues: Large ribosomal subunit protein uL1 (229 aa).

Belongs to the universal ribosomal protein uL1 family. Part of the 50S ribosomal subunit.

Binds directly to 23S rRNA. The L1 stalk is quite mobile in the ribosome, and is involved in E site tRNA release. Functionally, protein L1 is also a translational repressor protein, it controls the translation of the L11 operon by binding to its mRNA. The polypeptide is Large ribosomal subunit protein uL1 (Clostridium kluyveri (strain ATCC 8527 / DSM 555 / NBRC 12016 / NCIMB 10680 / K1)).